A 1134-amino-acid chain; its full sequence is MENLPFPLKLLSASSLNTPSSTPWVLDIFLTLVFALGFFFLLLPYFSYLRCDNPPSPSPKKRKRHLVSQRPAGRRGRPRGRMKNHSLRACRECPRGLEETWDLLSQLQSLLGPHLEKGDFGQLSGPDPPGEVGKRTPDGASRSSHEPTEDAAPIVSPLASPDPRTKHPQDLASTPPPGPMTTSVSSLSASQPPEPSLLLEHPSPEPPALFPHPPRTPDPLACSPPPPKGFTPPPLRDSTLLTPSHCDSVALPLDTVPQSLSPREDLAASVPGISGLGGSNSQVSALSWSQETTKTWCVFNSSVQQDHLSRQRDTTMSPLLFQAQPLSHLEPESQPFISSTPQFWPTPMAQAEAQAHLQSSFPVLSPAFLSPMKNTGVACPASQNKVQALSLPETQHPERPLLKKQLEGGLALPSRVQKSQDVFSVSTPNLPQERLTSILPENFPVSPELWRQLEQHMGQRGRIQESLDLMQLQDELPGTSQAKGKPRPWQSSTSTGESSKEAQTVKFQLERDPCPHLGQILGETPQNLSRGMESFPGKVLGATSEESERNLRKPLRSDSGSDLLRRTERNHIENILKAHMSRKLGQTNEGLIPVSVRRSWLAVNQAFPVSNTHVKTSNLAAPKSRKACVNTAQVLSFLEPCTQQVLGAHIVRFWAKHRWGLPLRVLKPIQCFQLEKVSSLSLIQLAGPSSDTCESGAGSKVEVATFLGEPPMASLRKQVLTKPSVHMPERLQASSPACKQFQRAPRGIPSSNDHGSLKAPTAGQEGRWPSKPLTYSLTGSTQQSRSLGAQSSRAGETREAVPQPTVPLGTCMRANLQATSEDVRGFKAPGASKSSLLPRMSVSQDPRKLCLMEEAVSEFEPGKATKSETQPQVSATVVLLPDGQASVVPHASENLASQVPQGHLQSMPTGNMQASQELCDLMSARRSNMGHKEPRNPNCQGSCKSQSPMFPPTHKRENSRKPNLEKHEEMFQGLRTPQLTPGRKTEDTRQNEGVQLLPSKKQPPSISHFGENIKQFFQTIFSKKERKPAPVTAESQKTVKNRSCVYGSSAEAERLMTAVGQILEENMSLCHARHASKVNQQRQQFQAPVCGFPCNHRHPFYSEHSRMLSYAASSQQATLKNQSRPNRDRQIRDQ.

A helical transmembrane segment spans residues 23–43 (PWVLDIFLTLVFALGFFFLLL). Disordered regions lie at residues 54-87 (PPSP…NHSL), 115-243 (LEKG…LLTP), 477-504 (PGTS…EAQT), 524-561 (TPQN…DSGS), 727-807 (MPER…PTVP), 928-1007 (NMGH…PSIS), and 1111-1134 (AASS…IRDQ). Positions 59–87 (PKKRKRHLVSQRPAGRRGRPRGRMKNHSL) are enriched in basic residues. Residues 132 to 148 (VGKRTPDGASRSSHEPT) are compositionally biased toward basic and acidic residues. Over residues 185–201 (SSLSASQPPEPSLLLEH) the composition is skewed to low complexity. Residues 204–235 (PEPPALFPHPPRTPDPLACSPPPPKGFTPPPL) are compositionally biased toward pro residues. Residues 489 to 504 (WQSSTSTGESSKEAQT) are compositionally biased toward polar residues. Polar residues-rich tracts occupy residues 773-794 (LTYS…SSRA) and 937-948 (PNCQGSCKSQSP). Residues 954 to 970 (HKRENSRKPNLEKHEEM) are compositionally biased toward basic and acidic residues. Positions 1111-1124 (AASSQQATLKNQSR) are enriched in polar residues. Residues 1125–1134 (PNRDRQIRDQ) show a composition bias toward basic and acidic residues.

This sequence belongs to the SPATA31 family.

The protein resides in the membrane. Its function is as follows. May play a role in spermatogenesis. The sequence is that of Spermatogenesis-associated protein 31C2 (SPATA31C2) from Homo sapiens (Human).